A 479-amino-acid polypeptide reads, in one-letter code: Sulfate adenylyltransferase subunit 1 (479 aa).

Residues 25–239 form the tr-type G domain; that stretch reads KSLLRFLTCG…EVLETVDIQR (215 aa). The interval 34–41 is G1; the sequence is GSVDDGKS. 34–41 is a binding site for GTP; it reads GSVDDGKS. The interval 92–96 is G2; that stretch reads GITID. The G3 stretch occupies residues 113–116; that stretch reads DTPG. GTP contacts are provided by residues 113–117 and 168–171; these read DTPGH and NKMD. A G4 region spans residues 168–171; that stretch reads NKMD. The segment at 206-208 is G5; sequence SAL.

It belongs to the TRAFAC class translation factor GTPase superfamily. Classic translation factor GTPase family. CysN/NodQ subfamily. In terms of assembly, heterodimer composed of CysD, the smaller subunit, and CysN.

It carries out the reaction sulfate + ATP + H(+) = adenosine 5'-phosphosulfate + diphosphate. It functions in the pathway sulfur metabolism; hydrogen sulfide biosynthesis; sulfite from sulfate: step 1/3. In terms of biological role, with CysD forms the ATP sulfurylase (ATPS) that catalyzes the adenylation of sulfate producing adenosine 5'-phosphosulfate (APS) and diphosphate, the first enzymatic step in sulfur assimilation pathway. APS synthesis involves the formation of a high-energy phosphoric-sulfuric acid anhydride bond driven by GTP hydrolysis by CysN coupled to ATP hydrolysis by CysD. This is Sulfate adenylyltransferase subunit 1 from Salmonella paratyphi A (strain ATCC 9150 / SARB42).